Consider the following 98-residue polypeptide: snRNA-activating protein complex subunit 5 (98 aa).

A compositionally biased stretch (polar residues) spans 73-82 (QTTLELSTKS). Residues 73–98 (QTTLELSTKSHVTEEEEEEEEEESDS) are disordered. The residue at position 85 (Thr-85) is a Phosphothreonine. The span at 86 to 98 (EEEEEEEEEESDS) shows a compositional bias: acidic residues.

Part of the SNAPc complex composed of 5 subunits: SNAPC1, SNAPC2, SNAPC3, SNAPC4 and SNAPC5. SNAPC5 interacts with SNAPC4.

It is found in the nucleus. Functionally, part of the SNAPc complex required for the transcription of both RNA polymerase II and III small-nuclear RNA genes. Binds to the proximal sequence element (PSE), a non-TATA-box basal promoter element common to these 2 types of genes. Recruits TBP and BRF2 to the U6 snRNA TATA box. This chain is snRNA-activating protein complex subunit 5 (SNAPC5), found in Homo sapiens (Human).